We begin with the raw amino-acid sequence, 396 residues long: Mevalonate kinase (396 aa).

Residues lysine 13, asparagine 55, serine 135, and 140–146 contribute to the ATP site; that span reads GAGLGSS. Residue serine 146 is the Proton donor of the active site. Mg(2+)-binding residues include serine 146 and glutamate 193. Aspartate 204 (proton acceptor) is an active-site residue.

This sequence belongs to the GHMP kinase family. Mevalonate kinase subfamily. Homodimer. Requires Mg(2+) as cofactor.

It is found in the cytoplasm. The protein localises to the peroxisome. It carries out the reaction (R)-mevalonate + ATP = (R)-5-phosphomevalonate + ADP + H(+). Its pathway is isoprenoid biosynthesis; isopentenyl diphosphate biosynthesis via mevalonate pathway; isopentenyl diphosphate from (R)-mevalonate: step 1/3. Farnesyl pyrophosphate and geranyl pyrophosphate inhibit mevalonate kinase activity by binding competitively at the ATP-binding sites. In terms of biological role, catalyzes the phosphorylation of mevalonate to mevalonate 5-phosphate, a key step in isoprenoid and cholesterol biosynthesis. This chain is Mevalonate kinase, found in Homo sapiens (Human).